The following is a 317-amino-acid chain: tRNA dimethylallyltransferase (317 aa).

Residue 19 to 26 (GPTASGKS) participates in ATP binding. 21 to 26 (TASGKS) is a substrate binding site. Residues 44 to 47 (DSMQ) are interaction with substrate tRNA.

It belongs to the IPP transferase family. In terms of assembly, monomer. Mg(2+) serves as cofactor.

The enzyme catalyses adenosine(37) in tRNA + dimethylallyl diphosphate = N(6)-dimethylallyladenosine(37) in tRNA + diphosphate. Catalyzes the transfer of a dimethylallyl group onto the adenine at position 37 in tRNAs that read codons beginning with uridine, leading to the formation of N6-(dimethylallyl)adenosine (i(6)A). The chain is tRNA dimethylallyltransferase from Methylorubrum extorquens (strain PA1) (Methylobacterium extorquens).